The primary structure comprises 141 residues: NADH dehydrogenase [ubiquinone] 1 alpha subcomplex subunit 11 (141 aa).

Alanine 2 bears the N-acetylalanine mark. 2 helical membrane passes run 21–43 and 58–80; these read KAYI…SITH and RFTF…SAQV.

This sequence belongs to the complex I NDUFA11 subunit family. Complex I is composed of 45 different subunits.

It is found in the mitochondrion inner membrane. Accessory subunit of the mitochondrial membrane respiratory chain NADH dehydrogenase (Complex I), that is believed not to be involved in catalysis. Complex I functions in the transfer of electrons from NADH to the respiratory chain. The immediate electron acceptor for the enzyme is believed to be ubiquinone. The sequence is that of NADH dehydrogenase [ubiquinone] 1 alpha subcomplex subunit 11 (Ndufa11) from Rattus norvegicus (Rat).